The sequence spans 37 residues: Gene 40 protein (37 aa).

The chain is Gene 40 protein (40) from Mycobacterium phage L5 (Mycobacteriophage L5).